A 428-amino-acid polypeptide reads, in one-letter code: Sialidase-3 (428 aa).

Positions 24–27 (YRIP) match the FRIP motif motif. The substrate site is built by R25 and R45. D50 (proton acceptor) is an active-site residue. One copy of the BNR 1 repeat lies at 129 to 140 (ICSQDAGYSWSD). Y179 and Y181 together coordinate substrate. A BNR 2 repeat occupies 203–214 (IYSDDLGATWHH). Substrate-binding residues include E225 and R245. The stretch at 254 to 265 (ALSIDHGECFQK) is one BNR 3 repeat. Position 314 is a phosphoserine (S314). Substrate is bound at residue R341. The active-site Nucleophile is the Y371. E388 is an active-site residue.

Belongs to the glycosyl hydrolase 33 family. Interacts with CAV1; this interaction enhances NEU3 sialidase activity within caveola. Interacts with EGFR; this interaction mediates desialylation of EGFR and enhances downstream signaling. Palmitoylated; may regulate intracellular trafficking and anchorage to plasma membrane and endomembranes. Expressed in brain.

It is found in the cell membrane. The protein localises to the membrane. The protein resides in the caveola. It localises to the early endosome membrane. Its subcellular location is the recycling endosome membrane. It is found in the lysosome membrane. It carries out the reaction Hydrolysis of alpha-(2-&gt;3)-, alpha-(2-&gt;6)-, alpha-(2-&gt;8)- glycosidic linkages of terminal sialic acid residues in oligosaccharides, glycoproteins, glycolipids, colominic acid and synthetic substrates.. The catalysed reaction is a ganglioside GD1a + H2O = a ganglioside GM1 + N-acetylneuraminate. It catalyses the reaction a ganglioside GD1a (d18:1(4E)) + H2O = a ganglioside GM1 (d18:1(4E)) + N-acetylneuraminate. The enzyme catalyses a ganglioside GD1b + H2O = a ganglioside GM1 + N-acetylneuraminate. It carries out the reaction a ganglioside GD1b (d18:1(4E)) + H2O = a ganglioside GM1 (d18:1(4E)) + N-acetylneuraminate. The catalysed reaction is a ganglioside GD3 + H2O = a ganglioside GM3 + N-acetylneuraminate. It catalyses the reaction a ganglioside GD3 (d18:1(4E)) + H2O = a ganglioside GM3 (d18:1(4E)) + N-acetylneuraminate. The enzyme catalyses a ganglioside GM3 + H2O = a beta-D-galactosyl-(1-&gt;4)-beta-D-glucosyl-(1&lt;-&gt;1)-ceramide + N-acetylneuraminate. It carries out the reaction a ganglioside GM1 + H2O = a ganglioside GA1 + N-acetylneuraminate. The catalysed reaction is a ganglioside GM1 (d18:1(4E)) + H2O = a ganglioside GA1 (d18:1(4E)) + N-acetylneuraminate. It catalyses the reaction a ganglioside GM2 (d18:1(4E)) + H2O = a ganglioside GA2 (d18:1(4E)) + N-acetylneuraminate. The enzyme catalyses a ganglioside GM3 (d18:1(4E)) + H2O = a beta-D-Gal-(1-&gt;4)-beta-D-Glc-(1&lt;-&gt;1)-Cer(d18:1(4E)) + N-acetylneuraminate. It carries out the reaction a ganglioside GT1b + H2O = a ganglioside GD1b + N-acetylneuraminate. Exo-alpha-sialidase that catalyzes the hydrolytic cleavage of the terminal sialic acid (N-acetylneuraminic acid, Neu5Ac) of a glycan moiety in the catabolism of glycolipids, glycoproteins and oligosacharides. Displays high catalytic efficiency for gangliosides including alpha-(2-&gt;3)-sialylated GD1a and GM3 and alpha-(2-&gt;8)-sialylated GD3. Plays a role in the regulation of transmembrane signaling through the modulation of ganglioside content of the lipid bilayer and by direct interaction with signaling receptors, such as EGFR. Desialylates EGFR and activates downstream signaling in proliferating cells. Contributes to clathrin-mediated endocytosis by regulating sorting of endocytosed receptors to early and recycling endosomes. The protein is Sialidase-3 (NEU3) of Bos taurus (Bovine).